Reading from the N-terminus, the 490-residue chain is MFDFDDLSQAIARQTVLCVGDLMLDEFVYGEVSRISPEAPAPVIAVQRSETNIGGAGNVARNIAALGARGIFVGLVGQDAAGDQLEAELAKVDGIESVLVRDPSRPTTRKVRFVSEHFSTHMLRADWERAAPASEDIEQKLIAAILPLIARADIVLLSDYAKGVLTARVLRNVIDATRRAGKRVIVDPKSANLAIYRGASVLTPNRKEFSEATRSRAETEQEIAAAAQDAIYLADCEAILVTQSERGMTLVPRQGDPIHVPAYPVKVRDVSGAGDTVVAVLAAALAAGAAWEDALRMASAAAAVAVSKQGTASVTSAELRRKILPHAYRAAEEKIIENDGELATRVAVWRSEGLRVGFTNGCFDILHPGHVKVLTAARAACDRLVVGLNSDTSVKRLKGESRPVQDERARAEVLAALEAVDLVAIFTEETPLRLIELVRPSVLVKGGDYTREQVVGHEVVEAAGGEVLLIDILKGHSTTALVDRARSDQR.

A ribokinase region spans residues 1–330; it reads MFDFDDLSQA…RKILPHAYRA (330 aa). 205-208 serves as a coordination point for ATP; it reads NRKE. D275 is a catalytic residue. Residues 358–490 form a cytidylyltransferase region; sequence FTNGCFDILH…LVDRARSDQR (133 aa).

It in the N-terminal section; belongs to the carbohydrate kinase PfkB family. This sequence in the C-terminal section; belongs to the cytidylyltransferase family. As to quaternary structure, homodimer.

It catalyses the reaction D-glycero-beta-D-manno-heptose 7-phosphate + ATP = D-glycero-beta-D-manno-heptose 1,7-bisphosphate + ADP + H(+). It carries out the reaction D-glycero-beta-D-manno-heptose 1-phosphate + ATP + H(+) = ADP-D-glycero-beta-D-manno-heptose + diphosphate. It participates in nucleotide-sugar biosynthesis; ADP-L-glycero-beta-D-manno-heptose biosynthesis; ADP-L-glycero-beta-D-manno-heptose from D-glycero-beta-D-manno-heptose 7-phosphate: step 1/4. It functions in the pathway nucleotide-sugar biosynthesis; ADP-L-glycero-beta-D-manno-heptose biosynthesis; ADP-L-glycero-beta-D-manno-heptose from D-glycero-beta-D-manno-heptose 7-phosphate: step 3/4. In terms of biological role, catalyzes the phosphorylation of D-glycero-D-manno-heptose 7-phosphate at the C-1 position to selectively form D-glycero-beta-D-manno-heptose-1,7-bisphosphate. Functionally, catalyzes the ADP transfer from ATP to D-glycero-beta-D-manno-heptose 1-phosphate, yielding ADP-D-glycero-beta-D-manno-heptose. The polypeptide is Bifunctional protein HldE (Bradyrhizobium sp. (strain ORS 278)).